A 335-amino-acid polypeptide reads, in one-letter code: Malate dehydrogenase (335 aa).

NAD(+) is bound at residue 11–17; it reads GAAGQIG. Substrate is bound by residues arginine 94 and arginine 100. NAD(+) contacts are provided by residues asparagine 107, glutamine 114, and 131 to 133; that span reads VGN. Positions 133 and 167 each coordinate substrate. Histidine 192 (proton acceptor) is an active-site residue.

It belongs to the LDH/MDH superfamily. MDH type 2 family.

It carries out the reaction (S)-malate + NAD(+) = oxaloacetate + NADH + H(+). In terms of biological role, catalyzes the reversible oxidation of malate to oxaloacetate. The sequence is that of Malate dehydrogenase from Bdellovibrio bacteriovorus (strain ATCC 15356 / DSM 50701 / NCIMB 9529 / HD100).